The primary structure comprises 338 residues: Tetraacyldisaccharide 4'-kinase (338 aa).

ATP is bound at residue 53 to 60 (VAGGAGKT).

This sequence belongs to the LpxK family.

It catalyses the reaction a lipid A disaccharide + ATP = a lipid IVA + ADP + H(+). The protein operates within glycolipid biosynthesis; lipid IV(A) biosynthesis; lipid IV(A) from (3R)-3-hydroxytetradecanoyl-[acyl-carrier-protein] and UDP-N-acetyl-alpha-D-glucosamine: step 6/6. Transfers the gamma-phosphate of ATP to the 4'-position of a tetraacyldisaccharide 1-phosphate intermediate (termed DS-1-P) to form tetraacyldisaccharide 1,4'-bis-phosphate (lipid IVA). This Polaromonas sp. (strain JS666 / ATCC BAA-500) protein is Tetraacyldisaccharide 4'-kinase.